The sequence spans 420 residues: Phospholipase A1-II 3 (420 aa).

Residues 1–21 (MCCFLLVSVLLATTLTDVASA) form the signal peptide. A glycan (N-linked (GlcNAc...) asparagine) is linked at asparagine 231. Catalysis depends on serine 240, which acts as the Acyl-ester intermediate. Residue serine 240 is the Charge relay system of the active site. N-linked (GlcNAc...) asparagine glycosylation is present at asparagine 294. Residues aspartate 305 and histidine 343 each act as charge relay system in the active site. A coiled-coil region spans residues 367–388 (VVDRDLALVNKEVDALRDEYQV). An N-linked (GlcNAc...) asparagine glycan is attached at asparagine 403.

This sequence belongs to the AB hydrolase superfamily. Lipase family.

It is found in the secreted. Its function is as follows. Acylhydrolase that catalyzes the hydrolysis of phospholipids at the sn-1 position. The polypeptide is Phospholipase A1-II 3 (Oryza sativa subsp. japonica (Rice)).